A 119-amino-acid chain; its full sequence is uncharacterized protein (119 aa).

The next 2 helical transmembrane spans lie at 53–73 (AATILMAWLLLTICFIPSFLA) and 92–112 (FITHVYCLMIKPFVLYFWFLF).

It is found in the membrane. This is an uncharacterized protein from Saccharomyces cerevisiae (strain ATCC 204508 / S288c) (Baker's yeast).